The chain runs to 100 residues: Urease subunit gamma (100 aa).

Belongs to the urease gamma subunit family. Heterotrimer of UreA (gamma), UreB (beta) and UreC (alpha) subunits. Three heterotrimers associate to form the active enzyme.

The protein resides in the cytoplasm. It catalyses the reaction urea + 2 H2O + H(+) = hydrogencarbonate + 2 NH4(+). Its pathway is nitrogen metabolism; urea degradation; CO(2) and NH(3) from urea (urease route): step 1/1. This is Urease subunit gamma from Corynebacterium urealyticum (strain ATCC 43042 / DSM 7109).